The following is a 435-amino-acid chain: Monodehydroascorbate reductase 3, cytosolic (435 aa).

FAD-binding positions include 14-17 (GGVA), Glu41, Arg48, Lys53, Ile96, and 147-148 (RE). Residues 172–178 (GGYIGLE), Glu196, Arg202, and Gly261 contribute to the NAD(+) site. An NADP(+)-binding site is contributed by 174–178 (YIGLE). NADP(+) is bound by residues Arg202 and Gly261. Asp298 is a binding site for FAD. 314–315 (EH) is a binding site for NAD(+). Position 314 to 315 (314 to 315 (EH)) interacts with NADP(+). FAD is bound at residue Val316. Position 320 (Arg320) interacts with L-ascorbate. Tyr349 contacts FAD. Tyr349 is a binding site for NAD(+). Tyr349 contributes to the NADP(+) binding site. Arg351 contacts L-ascorbate.

It belongs to the FAD-dependent oxidoreductase family. It depends on FAD as a cofactor.

Its subcellular location is the cytoplasm. It carries out the reaction 2 monodehydro-L-ascorbate radical + NADH + H(+) = 2 L-ascorbate + NAD(+). Functionally, catalyzes the conversion of monodehydroascorbate to ascorbate, oxidizing NADH in the process. Ascorbate is a major antioxidant against reactive oxygen species (ROS) and nitric oxide (NO). Can use NADPH as electron donor, but possesses lower activity compared to NADH as electron donor. The sequence is that of Monodehydroascorbate reductase 3, cytosolic from Oryza sativa subsp. japonica (Rice).